A 342-amino-acid chain; its full sequence is Isopentenyl-diphosphate delta-isomerase (342 aa).

Position 11-12 (11-12 (RK)) interacts with substrate. FMN contacts are provided by residues Ser-68, 69–71 (SMT), Ser-99, and Asn-127. 99-101 (SMR) lines the substrate pocket. Glu-163 contacts Mg(2+). FMN contacts are provided by residues Lys-194, Thr-224, and 295 to 296 (AG).

The protein belongs to the IPP isomerase type 2 family. Homooctamer. Dimer of tetramers. FMN serves as cofactor. Requires NADPH as cofactor. Mg(2+) is required as a cofactor.

It localises to the cytoplasm. It catalyses the reaction isopentenyl diphosphate = dimethylallyl diphosphate. In terms of biological role, involved in the biosynthesis of isoprenoids. Catalyzes the 1,3-allylic rearrangement of the homoallylic substrate isopentenyl (IPP) to its allylic isomer, dimethylallyl diphosphate (DMAPP). In Rickettsia prowazekii (strain Madrid E), this protein is Isopentenyl-diphosphate delta-isomerase.